The following is a 534-amino-acid chain: MSENKTRVDNAATGDIQHQGKDIFFAAVETTRMPMIVTDPNRPDNPIIFSNRAFLEMTGYTAEEILGTNCRFLQGPDTDPAVVQSIRDAIAQRNDISAEIINYRKDGSSFWNALFISPVYNDAGDLIYFFASQLDISRRKDAEEALRQAQKMEALGQLTGGIAHDFNNLLQVMGGYIDLIGSAAEKPVIDVQRVQRSVYHAKSAVERASTLTKQLLAFARKQKLQGRVLNLNGLVSIVEPLIERTFGPEVAIETDLEPALKNCRIDPTQAEVALLNIFINARDALIGRENPKVFIETRNLLVDELANMSYDGLLPGRYVSIAVTDNGIGMPASIRDRVMDPFFTTKEEGKGSGLGLSMVYGFAKQSGGAARIYTEEGVGTTLRLYFPVDEAGLTNTESPQASDRRLGSSERILIVEDRPDVAELAKMVLDDYGYVSEIVLNAREALKKFESGNMYDLLFTDLIMPGGMNGVMLAREVRRRYPKVKVLLTTGYAESSIERTDIGGSEFDVVSKPCMPHDLARKVRQVLDGPNGIA.

The region spanning Gly20–Arg93 is the PAS domain. Cys70 is modified (S-4a-FMN cysteine). One can recognise a PAC domain in the interval Asn94–Gln148. The Histidine kinase domain maps to Gly161–Glu390. His164 bears the Phosphohistidine; by autocatalysis mark. One can recognise a Response regulatory domain in the interval Arg411–Leu527. Asp461 is subject to 4-aspartylphosphate.

In terms of processing, FMN binds covalently to cysteine after exposure to blue light and this bond is spontaneously broken in the dark.

It catalyses the reaction ATP + protein L-histidine = ADP + protein N-phospho-L-histidine.. Functionally, photosensitive kinase and response regulator that is involved in increased bacterial virulence upon exposure to light. The sequence is that of Blue-light-activated protein from Pseudomonas syringae pv. tomato (strain ATCC BAA-871 / DC3000).